We begin with the raw amino-acid sequence, 330 residues long: Beta-ketoacyl-[acyl-carrier-protein] synthase III 2 (330 aa).

Active-site residues include cysteine 118 and histidine 246. An ACP-binding region spans residues 247 to 251 (QANLR). Asparagine 276 is an active-site residue.

It belongs to the thiolase-like superfamily. FabH family. As to quaternary structure, homodimer.

The protein resides in the cytoplasm. It carries out the reaction malonyl-[ACP] + acetyl-CoA + H(+) = 3-oxobutanoyl-[ACP] + CO2 + CoA. Its pathway is lipid metabolism; fatty acid biosynthesis. Functionally, catalyzes the condensation reaction of fatty acid synthesis by the addition to an acyl acceptor of two carbons from malonyl-ACP. Catalyzes the first condensation reaction which initiates fatty acid synthesis and may therefore play a role in governing the total rate of fatty acid production. Possesses both acetoacetyl-ACP synthase and acetyl transacylase activities. Its substrate specificity determines the biosynthesis of branched-chain and/or straight-chain of fatty acids. In Streptomyces coelicolor (strain ATCC BAA-471 / A3(2) / M145), this protein is Beta-ketoacyl-[acyl-carrier-protein] synthase III 2.